We begin with the raw amino-acid sequence, 335 residues long: Trans-1,2-dihydrobenzene-1,2-diol dehydrogenase (335 aa).

Belongs to the Gfo/Idh/MocA family. As to quaternary structure, homodimer.

The catalysed reaction is (1R,2R)-1,2-dihydrobenzene-1,2-diol + NADP(+) = catechol + NADPH + H(+). It catalyses the reaction D-xylose + NADP(+) = D-xylono-1,5-lactone + NADPH + H(+). The sequence is that of Trans-1,2-dihydrobenzene-1,2-diol dehydrogenase (DHDH) from Bos taurus (Bovine).